Consider the following 203-residue polypeptide: V-type ATP synthase subunit D (203 aa).

Belongs to the V-ATPase D subunit family.

Produces ATP from ADP in the presence of a proton gradient across the membrane. This chain is V-type ATP synthase subunit D, found in Thermotoga neapolitana (strain ATCC 49049 / DSM 4359 / NBRC 107923 / NS-E).